A 332-amino-acid polypeptide reads, in one-letter code: CRISPR-associated endonuclease Cas1 3 (332 aa).

3 residues coordinate Mn(2+): E159, H224, and E239.

The protein belongs to the CRISPR-associated endonuclease Cas1 family. As to quaternary structure, homodimer, forms a heterotetramer with a Cas2 homodimer. The cofactor is Mg(2+). Mn(2+) is required as a cofactor.

CRISPR (clustered regularly interspaced short palindromic repeat), is an adaptive immune system that provides protection against mobile genetic elements (viruses, transposable elements and conjugative plasmids). CRISPR clusters contain spacers, sequences complementary to antecedent mobile elements, and target invading nucleic acids. CRISPR clusters are transcribed and processed into CRISPR RNA (crRNA). Acts as a dsDNA endonuclease. Involved in the integration of spacer DNA into the CRISPR cassette. The sequence is that of CRISPR-associated endonuclease Cas1 3 from Thermus thermophilus (strain ATCC 27634 / DSM 579 / HB8).